We begin with the raw amino-acid sequence, 339 residues long: Heat-inducible transcription repressor HrcA (339 aa).

The protein belongs to the HrcA family.

In terms of biological role, negative regulator of class I heat shock genes (grpE-dnaK-dnaJ and groELS operons). Prevents heat-shock induction of these operons. This Clostridium perfringens (strain ATCC 13124 / DSM 756 / JCM 1290 / NCIMB 6125 / NCTC 8237 / Type A) protein is Heat-inducible transcription repressor HrcA.